A 491-amino-acid polypeptide reads, in one-letter code: MKQYRNFVDGKWVESSKTFQDVTPIDGSVVAVVHEADRDLVDAAVKAGHRALEGEWGRTTAAQRVDWLRRIANEMERRQQDFLDAEMADTGKPLSMAATIDIPRGIANFRNFADILATAPVDSHRLDLPDGAYALNYAARKPLGVVGVISPWNLPLLLLTWKVAPALACGNAVVVKPSEDTPGTATLLAEVMEAVGIPPGVFNLVHGFGPNSAGEFISQHPDISAITFTGESKTGSTIMRAAAEGVKPVSFELGGKNAAVIFADCDFEKMLDGMMRALFLNSGQVCLCSERVYVERPIFDRFCVALAERIKALKVDWPHETDTQMGPLISSKHRDKVLSYFELARQEGATFLAGGGVPRFGDERDNGAWVEPTVIAGLSDDARVVREEIFGPICHVTPFDSESEVIRRANDTRYGLAATIWTTNLSRAHRVSELMRVGISWVNTWFLRDLRTPFGGAGLSGIGREGGMHSLNFYSELTNVCVRIDKESPDV.

Catalysis depends on residues Glu252 and Cys286.

It belongs to the aldehyde dehydrogenase family. Homotrimer.

It carries out the reaction 2-aminomuconate 6-semialdehyde + NAD(+) + H2O = (2Z,4E)-2-aminomuconate + NADH + 2 H(+). Strongly inhibited by Ag(+) and Hg(+), and comnpletely inhibited by p-chloromercuribenzoic acid. Involved in the modified meta-cleavage pathway for 2-aminophenol catabolism. The enzyme is also active toward 2-hydroxymuconic 6-semialdehyde, acetaldehyde, propionaldehyde, and butyraldehyde. This Pseudomonas sp protein is 2-aminomuconic 6-semialdehyde dehydrogenase (amnC).